Reading from the N-terminus, the 482-residue chain is tRNA sulfurtransferase (482 aa).

The THUMP domain maps to 61 to 165 (DQILAILMQT…YDHLHQVLHR (105 aa)). ATP contacts are provided by residues 183–184 (LI), Lys-265, Gly-287, and Gln-296. Residues Cys-344 and Cys-456 are joined by a disulfide bond. Residues 404 to 482 (IGDGAIVLDI…GYGNIKVYRP (79 aa)) enclose the Rhodanese domain. The Cysteine persulfide intermediate role is filled by Cys-456.

The protein belongs to the ThiI family.

It is found in the cytoplasm. The enzyme catalyses [ThiI sulfur-carrier protein]-S-sulfanyl-L-cysteine + a uridine in tRNA + 2 reduced [2Fe-2S]-[ferredoxin] + ATP + H(+) = [ThiI sulfur-carrier protein]-L-cysteine + a 4-thiouridine in tRNA + 2 oxidized [2Fe-2S]-[ferredoxin] + AMP + diphosphate. The catalysed reaction is [ThiS sulfur-carrier protein]-C-terminal Gly-Gly-AMP + S-sulfanyl-L-cysteinyl-[cysteine desulfurase] + AH2 = [ThiS sulfur-carrier protein]-C-terminal-Gly-aminoethanethioate + L-cysteinyl-[cysteine desulfurase] + A + AMP + 2 H(+). The protein operates within cofactor biosynthesis; thiamine diphosphate biosynthesis. Its function is as follows. Catalyzes the ATP-dependent transfer of a sulfur to tRNA to produce 4-thiouridine in position 8 of tRNAs, which functions as a near-UV photosensor. Also catalyzes the transfer of sulfur to the sulfur carrier protein ThiS, forming ThiS-thiocarboxylate. This is a step in the synthesis of thiazole, in the thiamine biosynthesis pathway. The sulfur is donated as persulfide by IscS. This chain is tRNA sulfurtransferase, found in Photobacterium profundum (strain SS9).